The chain runs to 178 residues: Putative magnesium-dependent phosphatase YER134C (178 aa).

The Nucleophile role is filled by aspartate 11. Aspartate 11 contributes to the Mg(2+) binding site. Residues leucine 12, aspartate 13, serine 74, and arginine 75 each coordinate phosphate. Residue aspartate 13 coordinates Mg(2+). Catalysis depends on aspartate 13, which acts as the Proton donor. Arginine 75 lines the substrate pocket. Residue aspartate 141 coordinates Mg(2+).

This sequence belongs to the HAD-like hydrolase superfamily.

The protein resides in the cytoplasm. It localises to the nucleus. The catalysed reaction is O-phospho-L-tyrosyl-[protein] + H2O = L-tyrosyl-[protein] + phosphate. Functionally, magnesium-dependent phosphatase which may act as a tyrosine phosphatase. This Saccharomyces cerevisiae (strain ATCC 204508 / S288c) (Baker's yeast) protein is Putative magnesium-dependent phosphatase YER134C.